The primary structure comprises 697 residues: PHD finger protein At1g33420 (697 aa).

A PHD-type zinc finger spans residues 603–653 (KVDCKCGTKDDDGERMLACDGCGVWHHTRCIGINNADALPSKFLCFRCIEL).

The protein localises to the nucleus. The sequence is that of PHD finger protein At1g33420 from Arabidopsis thaliana (Mouse-ear cress).